A 333-amino-acid polypeptide reads, in one-letter code: Olfactory receptor 1078 (333 aa).

Residues 1–25 (MDSSNRTRVSEFLLLGFVENKDLQP) lie on the Extracellular side of the membrane. A glycan (N-linked (GlcNAc...) asparagine) is linked at Asn-5. A helical membrane pass occupies residues 26–50 (LIYGLFLSMYLVTVIGNISIIVAII). Residues 51-57 (SDPCLHT) lie on the Cytoplasmic side of the membrane. The helical transmembrane segment at 58 to 79 (PMYFFLSNLSFVDICFISTTVP) threads the bilayer. Over 80–100 (KMLVNIQTQNNVITYAGCITQ) the chain is Extracellular. A disulfide bridge links Cys-97 with Cys-189. The helical transmembrane segment at 101 to 120 (IYFFLLFVELDNFLLTIMAY) threads the bilayer. Topologically, residues 121–139 (DRYVAICHPMHYTVIMNYK) are cytoplasmic. Residues 140–158 (LCGFLVLVSWIVSVLHALF) form a helical membrane-spanning segment. At 159–196 (QSLMMLALPFCTHLEIPHYFCEPNQVIQLTCSDAFLND) the chain is on the extracellular side. A helical membrane pass occupies residues 197 to 219 (LVIYFTLVLLATVPLAGIFYSYF). At 220–236 (KIVSSICAISSVHGKYK) the chain is on the cytoplasmic side. Residues 237 to 260 (AFSTCASHLSVVSLFYCTGLGVYL) traverse the membrane as a helical segment. Residues 261 to 272 (SSAANNSSQASA) are Extracellular-facing. The chain crosses the membrane as a helical span at residues 273–292 (TASVMYTVVTPMVNPFIYSL). Topologically, residues 293-333 (RNKDVKSVLKKTLCEEVIRSPPSLLHFFLVLCHLPCFIFCY) are cytoplasmic.

The protein belongs to the G-protein coupled receptor 1 family. As to expression, olfactory epithelium.

The protein resides in the cell membrane. Functionally, odorant receptor. The sequence is that of Olfactory receptor 1078 (Olr1078) from Rattus norvegicus (Rat).